The chain runs to 229 residues: MNTPLHHIKNRTKILPPLRVGIGGPVGSGKTTLLEMLCKGMRERYDLVAITNDIYTKEDQRLLTESGALPADRIMGVETGGCPHTAIREDASINLEAIDRMLVDFPDADIVFIESGGDNLAATFSPELSDLTIYVIDVAAGEKIPRKGGPGITKSDLFVINKTDLAPYVGASLDVMAADTTRMRTTVKGLKPFVMTNLKTLSGVQEVMAFIESKGMLRSGDAATLRDGR.

24 to 31 lines the GTP pocket; sequence GPVGSGKT.

It belongs to the SIMIBI class G3E GTPase family. UreG subfamily. As to quaternary structure, homodimer. UreD, UreF and UreG form a complex that acts as a GTP-hydrolysis-dependent molecular chaperone, activating the urease apoprotein by helping to assemble the nickel containing metallocenter of UreC. The UreE protein probably delivers the nickel.

It is found in the cytoplasm. Facilitates the functional incorporation of the urease nickel metallocenter. This process requires GTP hydrolysis, probably effectuated by UreG. The chain is Urease accessory protein UreG from Albidiferax ferrireducens (strain ATCC BAA-621 / DSM 15236 / T118) (Rhodoferax ferrireducens).